The sequence spans 371 residues: N-acetyldiaminopimelate deacetylase (371 aa).

Asp68 is a catalytic residue. Glu127 acts as the Proton acceptor in catalysis.

The protein belongs to the peptidase M20A family. N-acetyldiaminopimelate deacetylase subfamily.

The catalysed reaction is N-acetyl-(2S,6S)-2,6-diaminopimelate + H2O = (2S,6S)-2,6-diaminopimelate + acetate. It functions in the pathway amino-acid biosynthesis; L-lysine biosynthesis via DAP pathway; LL-2,6-diaminopimelate from (S)-tetrahydrodipicolinate (acetylase route): step 3/3. Catalyzes the conversion of N-acetyl-diaminopimelate to diaminopimelate and acetate. The protein is N-acetyldiaminopimelate deacetylase of Oceanobacillus iheyensis (strain DSM 14371 / CIP 107618 / JCM 11309 / KCTC 3954 / HTE831).